The primary structure comprises 354 residues: Bacteriochlorophyll a protein (354 aa).

Bacteriochlorophyll a-binding residues include H99, H134, H278, H285, and H286.

Homotrimer. Each subunit contains 7 molecules of bacteriochlorophyll a.

Its function is as follows. Intermediary in the transfer of excitation energy from the chlorophyll to the reaction centers. This chain is Bacteriochlorophyll a protein (fmoA), found in Chlorobaculum thiosulfatiphilum (Chlorobium limicola f.sp. thiosulfatophilum).